The sequence spans 262 residues: Hemin import ATP-binding protein HmuV (262 aa).

One can recognise an ABC transporter domain in the interval 2–241 (IRASDISVRL…ETMEAVFGCR (240 aa)). 34–41 (GPNGSGKT) is an ATP binding site.

It belongs to the ABC transporter superfamily. Heme (hemin) importer (TC 3.A.1.14.5) family. The complex is composed of two ATP-binding proteins (HmuV), two transmembrane proteins (HmuU) and a solute-binding protein (HmuT).

It is found in the cell inner membrane. In terms of biological role, part of the ABC transporter complex HmuTUV involved in hemin import. Responsible for energy coupling to the transport system. This chain is Hemin import ATP-binding protein HmuV, found in Rhizobium meliloti (strain 1021) (Ensifer meliloti).